The sequence spans 150 residues: Aspartate carbamoyltransferase regulatory chain (150 aa).

Residues C105, C110, C133, and C136 each contribute to the Zn(2+) site.

The protein belongs to the PyrI family. As to quaternary structure, contains catalytic and regulatory chains. Requires Zn(2+) as cofactor.

Its function is as follows. Involved in allosteric regulation of aspartate carbamoyltransferase. The chain is Aspartate carbamoyltransferase regulatory chain from Thermococcus sibiricus (strain DSM 12597 / MM 739).